An 837-amino-acid polypeptide reads, in one-letter code: Tuftelin-interacting protein 11 (837 aa).

2 stretches are compositionally biased toward basic and acidic residues: residues methionine 1–arginine 13 and threonine 50–proline 64. 2 disordered regions span residues methionine 1–arginine 21 and threonine 50–threonine 136. The segment at methionine 1–threonine 50 is required for interaction with DHX15. 3 positions are modified to phosphoserine: serine 2, serine 59, and serine 98. The segment covering glutamate 91 to glutamate 102 has biased composition (acidic residues). A compositionally biased stretch (basic and acidic residues) spans lysine 103–proline 116. Position 144 is a phosphoserine (serine 144). One can recognise a G-patch domain in the interval threonine 149 to serine 195. The segment at glutamine 183–proline 236 is disordered. Phosphoserine is present on serine 210. Positions glutamate 217–glycine 231 are enriched in basic and acidic residues. A Nuclear localization signal motif is present at residues valine 700–asparagine 705. The required for nuclear speckle localization stretch occupies residues isoleucine 710 to leucine 734.

Belongs to the TFP11/STIP family. In terms of assembly, identified in the spliceosome C complex. Found in the Intron Large (IL) complex, a post-mRNA release spliceosomal complex containing the excised intron, U2, U5 and U6 snRNPs, and splicing factors. Interacts with TUFT1. Interacts with DHX15; indicative for a recruitment of DHX15 to the IL complex. Interacts with GCFC2.

Its subcellular location is the cytoplasm. The protein resides in the nucleus. Its function is as follows. Involved in pre-mRNA splicing, specifically in spliceosome disassembly during late-stage splicing events. Intron turnover seems to proceed through reactions in two lariat-intron associated complexes termed Intron Large (IL) and Intron Small (IS). In cooperation with DHX15 seems to mediate the transition of the U2, U5 and U6 snRNP-containing IL complex to the snRNP-free IS complex leading to efficient debranching and turnover of excised introns. May play a role in the differentiation of ameloblasts and odontoblasts or in the forming of the enamel extracellular matrix. The chain is Tuftelin-interacting protein 11 (TFIP11) from Oryctolagus cuniculus (Rabbit).